Reading from the N-terminus, the 385-residue chain is Chaperone protein DnaJ (385 aa).

Residues 5–70 enclose the J domain; that stretch reads DFYDVLGVSR…QSRAAYDQFG (66 aa). A CR-type zinc finger spans residues 143 to 221; sequence GKKAQVRVPG…CHGAGRVEKE (79 aa). The Zn(2+) site is built by Cys-156, Cys-159, Cys-173, Cys-176, Cys-195, Cys-198, Cys-209, and Cys-212. 4 CXXCXGXG motif repeats span residues 156–163, 173–180, 195–202, and 209–216; these read CEVCTGTG, CPTCQGHG, CPTCHGRG, and CTNCHGAG.

The protein belongs to the DnaJ family. Homodimer. It depends on Zn(2+) as a cofactor.

The protein resides in the cytoplasm. Its function is as follows. Participates actively in the response to hyperosmotic and heat shock by preventing the aggregation of stress-denatured proteins and by disaggregating proteins, also in an autonomous, DnaK-independent fashion. Unfolded proteins bind initially to DnaJ; upon interaction with the DnaJ-bound protein, DnaK hydrolyzes its bound ATP, resulting in the formation of a stable complex. GrpE releases ADP from DnaK; ATP binding to DnaK triggers the release of the substrate protein, thus completing the reaction cycle. Several rounds of ATP-dependent interactions between DnaJ, DnaK and GrpE are required for fully efficient folding. Also involved, together with DnaK and GrpE, in the DNA replication of plasmids through activation of initiation proteins. The polypeptide is Chaperone protein DnaJ (Parvibaculum lavamentivorans (strain DS-1 / DSM 13023 / NCIMB 13966)).